We begin with the raw amino-acid sequence, 113 residues long: UPF0342 protein SpyM3_0545 (113 aa).

The protein belongs to the UPF0342 family.

This Streptococcus pyogenes serotype M3 (strain ATCC BAA-595 / MGAS315) protein is UPF0342 protein SpyM3_0545.